Reading from the N-terminus, the 265-residue chain is Isoprenyl transferase (265 aa).

D35 is an active-site residue. D35 is a binding site for Mg(2+). Substrate-binding positions include G36–R39, W40, R48, H52, and S80–E82. N83 serves as the catalytic Proton acceptor. Residues W84, R86, R203, and R209–S211 contribute to the substrate site. E222 lines the Mg(2+) pocket.

Belongs to the UPP synthase family. As to quaternary structure, homodimer. Requires Mg(2+) as cofactor.

Functionally, catalyzes the condensation of isopentenyl diphosphate (IPP) with allylic pyrophosphates generating different type of terpenoids. This Prochlorococcus marinus (strain MIT 9313) protein is Isoprenyl transferase.